We begin with the raw amino-acid sequence, 218 residues long: Probable GTP-binding protein EngB (218 aa).

In terms of domain architecture, EngB-type G spans 23–200; the sequence is EVPEIAFVGR…AQLLWQWAHP (178 aa). GTP is bound by residues 31 to 38, 58 to 62, 80 to 83, 150 to 153, and 179 to 181; these read GRSNAGKS, GRTQH, DLPG, TKAD, and FSA. Mg(2+)-binding residues include serine 38 and threonine 60.

Belongs to the TRAFAC class TrmE-Era-EngA-EngB-Septin-like GTPase superfamily. EngB GTPase family. Requires Mg(2+) as cofactor.

Necessary for normal cell division and for the maintenance of normal septation. The polypeptide is Probable GTP-binding protein EngB (Acidovorax ebreus (strain TPSY) (Diaphorobacter sp. (strain TPSY))).